A 364-amino-acid polypeptide reads, in one-letter code: DNA replication and repair protein RecF (364 aa).

30–37 (GNNGQGKT) is a binding site for ATP.

It belongs to the RecF family.

It localises to the cytoplasm. The RecF protein is involved in DNA metabolism; it is required for DNA replication and normal SOS inducibility. RecF binds preferentially to single-stranded, linear DNA. It also seems to bind ATP. The polypeptide is DNA replication and repair protein RecF (Geobacter sp. (strain M21)).